The chain runs to 1192 residues: Protein FAM83H (1192 aa).

5 disordered regions span residues Glu-435–Gly-542, Asp-557–Pro-661, Ser-695–Pro-720, Leu-737–Ile-1082, and Ile-1094–Asn-1145. Residues Met-437–Arg-447 show a composition bias toward basic and acidic residues. 2 stretches are compositionally biased toward polar residues: residues Gln-523 to Ser-538 and Ser-629 to Thr-652. Basic and acidic residues-rich tracts occupy residues Leu-737 to Ser-759 and Asp-768 to Lys-789. Residues Val-790 to Asp-810 are compositionally biased toward polar residues. The segment covering Asp-820–Leu-834 has biased composition (basic and acidic residues). Polar residues predominate over residues Thr-861–Asp-878. Basic and acidic residues-rich tracts occupy residues Val-880–Pro-892 and Ala-914–Lys-925. Positions Ser-926–Ser-946 are enriched in low complexity. Residues Glu-994–Lys-1005 show a composition bias toward basic and acidic residues. Residues Lys-1068 to Ile-1082 show a composition bias toward polar residues. The span at Gln-1107–Val-1122 shows a compositional bias: basic and acidic residues.

Belongs to the FAM83 family.

It localises to the cytoplasm. The protein localises to the cytoskeleton. In terms of biological role, may play a role in keratin cytoskeleton disassembly. This chain is Protein FAM83H, found in Danio rerio (Zebrafish).